The primary structure comprises 441 residues: MSLITDIIAREVLDSRGNPTLEAEVITELGGFGRGMVPSGASTGEHEAVELRDGDKSRFGGKGTTKAVANVNDAIAKALVGKFDVTDQRAIDQAMIELDGTENKGNLGANAILAVSIAAARAAADELGVPLFSYLGGANSYVLPTPMMNVINGGAHSANKVDFQEFMIMPVGAPTVKEAIRYGSETFHALKKLLEADGKATSVGDEGGFAPDFADNEEPLKYLIRAIEAAGYKPGKDIAIAVDVASSELYDAETKTYKLRWSTGEEFTTPEFIKYLEDLADRYPIISIEDPIDENEWEDWAAITAELGKKVQLVGDDFFVTNTQYLEKGINMGAANSILIKVNQIGTLTETFEAIEMAKEAGYTAIVSHRSGETEDTTISDLVVATNAGQIKTGSLSRTDRIAKYNQLIRIEELLDTTAKYKGIHSFYNLSAAAREVIENK.

Gln164 contributes to the (2R)-2-phosphoglycerate binding site. Glu206 (proton donor) is an active-site residue. Asp243, Glu289, and Asp316 together coordinate Mg(2+). (2R)-2-phosphoglycerate contacts are provided by Lys341, Arg370, Ser371, and Lys392. The active-site Proton acceptor is the Lys341.

It belongs to the enolase family. Requires Mg(2+) as cofactor.

It is found in the cytoplasm. The protein resides in the secreted. The protein localises to the cell surface. It carries out the reaction (2R)-2-phosphoglycerate = phosphoenolpyruvate + H2O. Its pathway is carbohydrate degradation; glycolysis; pyruvate from D-glyceraldehyde 3-phosphate: step 4/5. Its function is as follows. Catalyzes the reversible conversion of 2-phosphoglycerate (2-PG) into phosphoenolpyruvate (PEP). It is essential for the degradation of carbohydrates via glycolysis. The polypeptide is Enolase (Leuconostoc mesenteroides subsp. mesenteroides (strain ATCC 8293 / DSM 20343 / BCRC 11652 / CCM 1803 / JCM 6124 / NCDO 523 / NBRC 100496 / NCIMB 8023 / NCTC 12954 / NRRL B-1118 / 37Y)).